The following is a 1072-amino-acid chain: DNA-directed RNA polymerase subunit beta (1072 aa).

Belongs to the RNA polymerase beta chain family. In plastids the minimal PEP RNA polymerase catalytic core is composed of four subunits: alpha, beta, beta', and beta''. When a (nuclear-encoded) sigma factor is associated with the core the holoenzyme is formed, which can initiate transcription.

The protein resides in the plastid. It localises to the chloroplast. The enzyme catalyses RNA(n) + a ribonucleoside 5'-triphosphate = RNA(n+1) + diphosphate. In terms of biological role, DNA-dependent RNA polymerase catalyzes the transcription of DNA into RNA using the four ribonucleoside triphosphates as substrates. The polypeptide is DNA-directed RNA polymerase subunit beta (Nasturtium officinale (Watercress)).